Reading from the N-terminus, the 130-residue chain is Type VII secretion system extracellular protein C (130 aa).

Belongs to the EsxC family. As to quaternary structure, forms both homodimers and heterodimers with EsxA. Homodimerization is calcium-dependent.

It localises to the secreted. Implements its pathogenic function during infection. The chain is Type VII secretion system extracellular protein C from Staphylococcus aureus (strain Mu50 / ATCC 700699).